The primary structure comprises 462 residues: Stabilizer of axonemal microtubules 1 (462 aa).

Mn regions lie at residues 30-64 (KPCF…KVNI), 65-97 (PMEG…PIQD), 98-131 (EMDF…QCND), 132-165 (KMEC…PASC), 166-199 (RFDH…LCNI), 200-232 (PLES…PSEV), 233-266 (PFDS…GLDI), 267-299 (PFPS…PPEG), 300-332 (KMDL…KKSD), 333-366 (RFES…FSDE), 367-400 (PMEY…RVNI), and 401-434 (PLEG…IFDE).

The protein belongs to the FAM154 family. Associates with microtubules via the Mn regions.

The protein localises to the cytoplasm. It is found in the cytoskeleton. The protein resides in the microtubule organizing center. Its subcellular location is the centrosome. It localises to the centriole. The protein localises to the cilium basal body. It is found in the cilium axoneme. Its function is as follows. May play a role in the regulation of cilium length. Stabilizes microtubules at low temperature. In Rattus norvegicus (Rat), this protein is Stabilizer of axonemal microtubules 1 (Saxo1).